The chain runs to 297 residues: Pyrroline-5-carboxylate reductase 1 (297 aa).

This sequence belongs to the pyrroline-5-carboxylate reductase family.

The protein localises to the cytoplasm. It carries out the reaction L-proline + NADP(+) = (S)-1-pyrroline-5-carboxylate + NADPH + 2 H(+). It catalyses the reaction L-proline + NAD(+) = (S)-1-pyrroline-5-carboxylate + NADH + 2 H(+). Its pathway is amino-acid biosynthesis; L-proline biosynthesis; L-proline from L-glutamate 5-semialdehyde: step 1/1. In terms of biological role, catalyzes the reduction of 1-pyrroline-5-carboxylate (PCA) to L-proline. The sequence is that of Pyrroline-5-carboxylate reductase 1 (proH) from Bacillus subtilis (strain 168).